Reading from the N-terminus, the 147-residue chain is Large ribosomal subunit protein uL13 (147 aa).

Belongs to the universal ribosomal protein uL13 family. As to quaternary structure, part of the 50S ribosomal subunit.

Its function is as follows. This protein is one of the early assembly proteins of the 50S ribosomal subunit, although it is not seen to bind rRNA by itself. It is important during the early stages of 50S assembly. The sequence is that of Large ribosomal subunit protein uL13 from Pseudarthrobacter chlorophenolicus (strain ATCC 700700 / DSM 12829 / CIP 107037 / JCM 12360 / KCTC 9906 / NCIMB 13794 / A6) (Arthrobacter chlorophenolicus).